A 577-amino-acid polypeptide reads, in one-letter code: Putative pseudouridine synthase B0024.11 (577 aa).

The active-site Nucleophile is the Asp-188. In terms of domain architecture, TRUD spans 265-472 (GFINYFGTQR…GESSRCLFVE (208 aa)). The segment covering 538–565 (KAMRDASFKTRGDDEKTEENVLEEKGSD) has biased composition (basic and acidic residues). Residues 538–577 (KAMRDASFKTRGDDEKTEENVLEEKGSDDANELNLVSEDQ) form a disordered region.

Belongs to the pseudouridine synthase TruD family.

The catalysed reaction is a uridine in tRNA = a pseudouridine in tRNA. The polypeptide is Putative pseudouridine synthase B0024.11 (Caenorhabditis elegans).